The following is a 345-amino-acid chain: MTQAATRPTAETGNDEDILAVARRQVLEGGQGLSRDQVLQVLRLPDDRLDDLLALAHEVRMRWCGPEVEVEGIISLKTGGCPEDCHFCSQSGLFASPVRSARLDIPSLVEAAKQTAKSGATEFCIVAAVRGPDERLLAQVAAGIEAIRNEVEINIACSLGMLTAEQVEQLAEMGVHRYNHNLETARSFFPNVVTTHTWEERWDTLSMVRDAGMEVCCGGILGMGETLEQRAEFAAELAELGPDEVPLNFLNPRPGTPFGDLEVMPATEALKSVAAFRLALPRTMLRFAGGREITLGDLGAKKGILGGINAVIVGNYLTTLGRPAESDLELLDDLQMPLKGLNASL.

In terms of domain architecture, Radical SAM core spans 66–291; that stretch reads PEVEVEGIIS…RTMLRFAGGR (226 aa). Residues Cys-81, Cys-85, and Cys-88 each contribute to the [4Fe-4S] cluster site. [2Fe-2S] cluster contacts are provided by Cys-124, Cys-157, Cys-216, and Arg-286.

This sequence belongs to the radical SAM superfamily. Biotin synthase family. In terms of assembly, homodimer. It depends on [4Fe-4S] cluster as a cofactor. Requires [2Fe-2S] cluster as cofactor.

It carries out the reaction (4R,5S)-dethiobiotin + (sulfur carrier)-SH + 2 reduced [2Fe-2S]-[ferredoxin] + 2 S-adenosyl-L-methionine = (sulfur carrier)-H + biotin + 2 5'-deoxyadenosine + 2 L-methionine + 2 oxidized [2Fe-2S]-[ferredoxin]. Its pathway is cofactor biosynthesis; biotin biosynthesis; biotin from 7,8-diaminononanoate: step 2/2. Catalyzes the conversion of dethiobiotin (DTB) to biotin by the insertion of a sulfur atom into dethiobiotin via a radical-based mechanism. The protein is Biotin synthase of Mycobacterium avium (strain 104).